Consider the following 761-residue polypeptide: Translational repressor ifet-1 (761 aa).

5 disordered regions span residues Ser-101–Gly-274, Lys-386–His-446, Val-557–Gln-592, Gln-681–Gln-702, and Gly-730–Lys-761. 3 stretches are compositionally biased toward basic and acidic residues: residues Pro-114 to Gly-128, Arg-164 to Leu-189, and Ile-212 to Lys-222. Composition is skewed to polar residues over residues Gln-400–Gln-410, Val-557–Ala-568, Ser-576–Gln-592, and Glu-690–Gln-702.

In terms of assembly, interacts with cgh-1. Interacts with ife-1 and oma-1. In the embryo, significantly enriched in the germ cell lineage.

It is found in the cytoplasm. In terms of biological role, involved in translational repression of multiple mRNAs in the distal gonad. Recruited to the 3' untranslated region (UTR) of zif-1 by oma-1 and is required for translational repression of zif-1. May also be involved in translational repression of mei-1 through recruitment to the mei-1 3' UTR by oma-1. Required for oogenesis but not spermatogenesis, for P granule formation and for the localization of car-1 and cgh-1 to P granules. Required for normal spindle orientation in early embryos. In Caenorhabditis elegans, this protein is Translational repressor ifet-1.